The sequence spans 38 residues: Natriuretic peptide DNP (38 aa).

Cysteine 7 and cysteine 23 form a disulfide bridge. The interval 19–38 (SNLGCPSLRDPRPNAPSTSA) is disordered.

It belongs to the natriuretic peptide family. Expressed by the venom gland.

The protein localises to the secreted. Exhibits vasodilator, natriuretic and diuretic properties in animal models and human tissues. Acts by stimulating cGMP via the natriuretic peptide receptor 1 (NPR1). Is a poor agonist of the atrial natriuretic peptide receptor 2 (NPR2). Is not degraded by neutral endopeptidase (NEP/MME). Binds to atrial natriuretic peptide clearance receptor (NPR-C/NPR3), which may be responsible of the removal of DNP from the circulation. Increases calcium uptake and induces histamine release from rat peritoneal mast cells. Increases calcium-activated potassium (KCa) current in gastric antral circular smooth muscle cells by increasing cGMP production and activating inositol trisphosphate receptors (IP3Rs). In vivo, reduces both systolic and diastolic blood pressure with no effect on heart rate, when intravenously injected in conscious rabbits. The protein is Natriuretic peptide DNP of Dendroaspis angusticeps (Eastern green mamba).